An 898-amino-acid chain; its full sequence is Protein translocase subunit SecA (898 aa).

ATP contacts are provided by residues Gln87, 105-109 (GEGKT), and Asp512. A compositionally biased stretch (polar residues) spans 855 to 865 (MQYQNNEGTSS). The interval 855–898 (MQYQNNEGTSSLHEKSEHKIGRNESCPCGSGKKYKHCHGSKAKY) is disordered. The segment covering 866-876 (LHEKSEHKIGR) has biased composition (basic and acidic residues). Zn(2+)-binding residues include Cys880, Cys882, Cys891, and His892. Residues 886 to 898 (KKYKHCHGSKAKY) are compositionally biased toward basic residues.

This sequence belongs to the SecA family. As to quaternary structure, monomer and homodimer. Part of the essential Sec protein translocation apparatus which comprises SecA, SecYEG and auxiliary proteins SecDF-YajC and YidC. Zn(2+) serves as cofactor.

The protein resides in the cell inner membrane. The protein localises to the cytoplasm. The enzyme catalyses ATP + H2O + cellular proteinSide 1 = ADP + phosphate + cellular proteinSide 2.. Part of the Sec protein translocase complex. Interacts with the SecYEG preprotein conducting channel. Has a central role in coupling the hydrolysis of ATP to the transfer of proteins into and across the cell membrane, serving both as a receptor for the preprotein-SecB complex and as an ATP-driven molecular motor driving the stepwise translocation of polypeptide chains across the membrane. The protein is Protein translocase subunit SecA of Histophilus somni (strain 129Pt) (Haemophilus somnus).